The following is a 339-amino-acid chain: 3-isopropylmalate dehydrogenase (339 aa).

Arginine 87, arginine 97, arginine 124, and aspartate 214 together coordinate substrate. The Mg(2+) site is built by aspartate 214, aspartate 238, and aspartate 242. 274-286 (GSAPDIAGQGIAD) is an NAD(+) binding site.

The protein belongs to the isocitrate and isopropylmalate dehydrogenases family. LeuB type 2 subfamily. In terms of assembly, homodimer. Requires Mg(2+) as cofactor. It depends on Mn(2+) as a cofactor.

It localises to the cytoplasm. It catalyses the reaction (2R,3S)-3-isopropylmalate + NAD(+) = 4-methyl-2-oxopentanoate + CO2 + NADH. The protein operates within amino-acid biosynthesis; L-leucine biosynthesis; L-leucine from 3-methyl-2-oxobutanoate: step 3/4. Catalyzes the oxidation of 3-carboxy-2-hydroxy-4-methylpentanoate (3-isopropylmalate) to 3-carboxy-4-methyl-2-oxopentanoate. The product decarboxylates to 4-methyl-2 oxopentanoate. The protein is 3-isopropylmalate dehydrogenase of Mycobacterium marinum (strain ATCC BAA-535 / M).